The sequence spans 246 residues: Orotidine 5'-phosphate decarboxylase (246 aa).

Residues D22, K44, 71 to 80 (DLKYHDIPHT), T130, R191, Q201, G221, and R222 contribute to the substrate site. The active-site Proton donor is K73.

The protein belongs to the OMP decarboxylase family. Type 1 subfamily. As to quaternary structure, homodimer.

The catalysed reaction is orotidine 5'-phosphate + H(+) = UMP + CO2. It participates in pyrimidine metabolism; UMP biosynthesis via de novo pathway; UMP from orotate: step 2/2. In terms of biological role, catalyzes the decarboxylation of orotidine 5'-monophosphate (OMP) to uridine 5'-monophosphate (UMP). This Neisseria meningitidis serogroup C (strain 053442) protein is Orotidine 5'-phosphate decarboxylase.